Consider the following 1066-residue polypeptide: Isoleucine--tRNA ligase (1066 aa).

The short motif at P49 to T59 is the 'HIGH' region element. The 'KMSKS' region signature appears at K625–S629. Residue K628 coordinates ATP.

It belongs to the class-I aminoacyl-tRNA synthetase family. IleS type 2 subfamily. Monomer. Requires Zn(2+) as cofactor.

The protein localises to the cytoplasm. The enzyme catalyses tRNA(Ile) + L-isoleucine + ATP = L-isoleucyl-tRNA(Ile) + AMP + diphosphate. In terms of biological role, catalyzes the attachment of isoleucine to tRNA(Ile). As IleRS can inadvertently accommodate and process structurally similar amino acids such as valine, to avoid such errors it has two additional distinct tRNA(Ile)-dependent editing activities. One activity is designated as 'pretransfer' editing and involves the hydrolysis of activated Val-AMP. The other activity is designated 'posttransfer' editing and involves deacylation of mischarged Val-tRNA(Ile). The chain is Isoleucine--tRNA ligase from Pyrococcus furiosus (strain ATCC 43587 / DSM 3638 / JCM 8422 / Vc1).